The sequence spans 530 residues: Berberine bridge enzyme-like 4 (530 aa).

The N-terminal stretch at 1-19 (MKGTLSVLCLVLLVSVLEA) is a signal peptide. The cysteines at positions 32 and 95 are disulfide-linked. An N-linked (GlcNAc...) asparagine glycan is attached at asparagine 52. An FAD-binding PCMH-type domain is found at 73 to 247 (NYRKLLAIVA…LSWKINLVDV (175 aa)). A cross-link (6-(S-cysteinyl)-8alpha-(pros-histidyl)-FAD (His-Cys)) is located at residues 110–172 (HDYEGLSYMS…QTLAFPAGVC (63 aa)). Residues asparagine 257, asparagine 292, asparagine 341, and asparagine 441 are each glycosylated (N-linked (GlcNAc...) asparagine).

It belongs to the oxygen-dependent FAD-linked oxidoreductase family. FAD is required as a cofactor. In terms of processing, the FAD cofactor is bound via a bicovalent 6-S-cysteinyl, 8alpha-N1-histidyl FAD linkage.

It is found in the secreted. The protein resides in the cell wall. In terms of biological role, probable flavin-dependent oxidoreductase. This chain is Berberine bridge enzyme-like 4, found in Arabidopsis thaliana (Mouse-ear cress).